The primary structure comprises 231 residues: MEPNVVDHTSMWSLISNASIVVQLVMLTLVAASVTSWIMIFQRGNAMRAAKKALDAFEERFWSGIDLSKLYRQAGSNPDPDSGVEQIFRAGFKEFSRLRQQPGVDPDAVMEGVARAMRVAISREEEKLEASLPFLATVGSTSPYVGLFGTVWGIMNSFRGLATVQQATLATVAPGIAEALIATAIGLFAAIPAVIAYNRFSARSEMLIGRYYTFADEFQAILHRKVHTSDD.

3 helical membrane passes run Ile-20–Ile-40, Phe-134–Ile-154, and Ile-176–Ala-196.

It belongs to the ExbB/TolQ family. As to quaternary structure, the Tol-Pal system is composed of five core proteins: the inner membrane proteins TolA, TolQ and TolR, the periplasmic protein TolB and the outer membrane protein Pal. They form a network linking the inner and outer membranes and the peptidoglycan layer.

The protein localises to the cell inner membrane. Functionally, part of the Tol-Pal system, which plays a role in outer membrane invagination during cell division and is important for maintaining outer membrane integrity. The chain is Tol-Pal system protein TolQ from Pseudomonas aeruginosa (strain ATCC 15692 / DSM 22644 / CIP 104116 / JCM 14847 / LMG 12228 / 1C / PRS 101 / PAO1).